The primary structure comprises 239 residues: Small ribosomal subunit protein uS2 (239 aa).

Belongs to the universal ribosomal protein uS2 family.

In Parasynechococcus marenigrum (strain WH8102), this protein is Small ribosomal subunit protein uS2.